The primary structure comprises 216 residues: Protein ORM2 (216 aa).

Residues 1–50 form a disordered region; that stretch reads MIDRTKNESPAFEESPLTPNVSNLKPFPSQSNKISTPVTDHRRRRSSSVI. Over 1–78 the chain is Cytoplasmic; the sequence is MIDRTKNESP…NMNATWVDQR (78 aa). Residues Ser9 and Ser15 each carry the phosphoserine modification. A compositionally biased stretch (polar residues) spans 17–38; the sequence is LTPNVSNLKPFPSQSNKISTPV. Residue Thr18 is modified to Phosphothreonine. 3 positions are modified to phosphoserine: Ser22, Ser29, and Ser51. A helical transmembrane segment spans residues 79–99; sequence GAWLIHIVVIVLLRLFYSLFG. Residues 100-103 lie on the Extracellular side of the membrane; that stretch reads STPK. Residues 104–124 form a helical membrane-spanning segment; sequence WTWTLTNMTYIIGFYIMFHLV. Residues 125-148 lie on the Cytoplasmic side of the membrane; the sequence is KGTPFDFNGGAYDNLTMWEQINDE. Residues 149-169 form a helical membrane-spanning segment; it reads TLYTPTRKFLLIVPIVLFLIS. Residues 170 to 177 lie on the Extracellular side of the membrane; that stretch reads NQYYRNDM. Residues 178-198 traverse the membrane as a helical segment; sequence TLFLSNLAVTVLIGVVPKLGI. The Cytoplasmic portion of the chain corresponds to 199 to 216; the sequence is THRLRISIPGITGRAQIS.

Belongs to the ORM family. Component of the SPOTS complex, at least composed of LCB1/2 (LCB1 and/or LCB2), ORM1/2 (ORM1 and/or ORM2), SAC1 and TSC3. In terms of processing, phosphorylated in case of disruption of sphingolipid synthesis. Phosphorylation regulates the inhibitory activity of serine palmitoyltransferases (LCB1 and LCB2).

The protein resides in the endoplasmic reticulum membrane. Its function is as follows. Component of the SPOTS complex that acts as a negative regulator of sphingolipid synthesis. Acts by inhibiting serine palmitoyltransferases (LCB1 and LCB2) activity. Along with ORM1, plays a role in the phosphorylation of LAC1 and YPK1, the distribution of actin patches between mother and daughter cells, and in endocytosis. The sequence is that of Protein ORM2 (ORM2) from Saccharomyces cerevisiae (strain ATCC 204508 / S288c) (Baker's yeast).